The chain runs to 153 residues: Ribonuclease HI (153 aa).

The RNase H type-1 domain occupies 1–141 (MKSVNIFTDG…CDELAKLGAN (141 aa)). Positions 9, 47, 69, and 133 each coordinate Mg(2+).

Belongs to the RNase H family. In terms of assembly, monomer. Requires Mg(2+) as cofactor.

The protein resides in the cytoplasm. The enzyme catalyses Endonucleolytic cleavage to 5'-phosphomonoester.. Functionally, endonuclease that specifically degrades the RNA of RNA-DNA hybrids. This Haemophilus ducreyi (strain 35000HP / ATCC 700724) protein is Ribonuclease HI.